Here is a 503-residue protein sequence, read N- to C-terminus: Probable cytochrome P450 303a1 (503 aa).

Residue cysteine 448 participates in heme binding.

It belongs to the cytochrome P450 family. Requires heme as cofactor.

The protein resides in the endoplasmic reticulum membrane. It is found in the microsome membrane. In terms of biological role, may be involved in the metabolism of insect hormones and in the breakdown of synthetic insecticides. This Drosophila melanogaster (Fruit fly) protein is Probable cytochrome P450 303a1 (Cyp303a1).